Consider the following 384-residue polypeptide: CDP-diacylglycerol--serine O-phosphatidyltransferase (384 aa).

The protein belongs to the CDP-alcohol phosphatidyltransferase class-I family.

The protein localises to the membrane. The enzyme catalyses a CDP-1,2-diacyl-sn-glycerol + L-serine = a 1,2-diacyl-sn-glycero-3-phospho-L-serine + CMP + H(+). It participates in phospholipid metabolism; phosphatidylethanolamine biosynthesis; phosphatidylethanolamine from CDP-diacylglycerol: step 1/2. In Encephalitozoon cuniculi (strain GB-M1) (Microsporidian parasite), this protein is CDP-diacylglycerol--serine O-phosphatidyltransferase (PSS).